The following is a 514-amino-acid chain: 2,3-bisphosphoglycerate-independent phosphoglycerate mutase (514 aa).

Residues Asp15 and Ser65 each contribute to the Mn(2+) site. The active-site Phosphoserine intermediate is Ser65. Substrate is bound by residues His126, 156-157, Arg188, Arg194, 261-264, and Lys335; these read RD and RADR. Positions 403, 407, 444, 445, and 462 each coordinate Mn(2+).

It belongs to the BPG-independent phosphoglycerate mutase family. In terms of assembly, monomer. The cofactor is Mn(2+).

The catalysed reaction is (2R)-2-phosphoglycerate = (2R)-3-phosphoglycerate. It participates in carbohydrate degradation; glycolysis; pyruvate from D-glyceraldehyde 3-phosphate: step 3/5. Functionally, catalyzes the interconversion of 2-phosphoglycerate and 3-phosphoglycerate. This Syntrophotalea carbinolica (strain DSM 2380 / NBRC 103641 / GraBd1) (Pelobacter carbinolicus) protein is 2,3-bisphosphoglycerate-independent phosphoglycerate mutase.